We begin with the raw amino-acid sequence, 130 residues long: MTRLDPLADAMSTLTNGSMLGKREVVINIASKLIGKVLKVLKEHGYIDEFEYVDDGRFGKYVVRLNGRINKAGVIKPRFPVKVGEFSRWEKIYLPAENVGLIIVSTNQGVMTHREAKERGIGGVLIAYCY.

The protein belongs to the universal ribosomal protein uS8 family. Part of the 30S ribosomal subunit.

In terms of biological role, one of the primary rRNA binding proteins, it binds directly to 16S rRNA central domain where it helps coordinate assembly of the platform of the 30S subunit. The chain is Small ribosomal subunit protein uS8 from Korarchaeum cryptofilum (strain OPF8).